The chain runs to 165 residues: Small ribosomal subunit protein uS5 (165 aa).

The region spanning 10–73 is the S5 DRBM domain; the sequence is LVEKLVSVDR…EAAKRNMITV (64 aa).

This sequence belongs to the universal ribosomal protein uS5 family. As to quaternary structure, part of the 30S ribosomal subunit. Contacts proteins S4 and S8.

With S4 and S12 plays an important role in translational accuracy. Functionally, located at the back of the 30S subunit body where it stabilizes the conformation of the head with respect to the body. The chain is Small ribosomal subunit protein uS5 from Psychrobacter sp. (strain PRwf-1).